Consider the following 208-residue polypeptide: Na(+)-translocating NADH-quinone reductase subunit D (208 aa).

The next 5 helical transmembrane spans lie at 42–62 (IVMG…ISLV), 72–92 (IIVQ…LLQA), 103–123 (VFVG…AFAM), 131–151 (LIDG…VATV), and 178–198 (NGLF…IWGL).

It belongs to the NqrDE/RnfAE family. As to quaternary structure, composed of six subunits; NqrA, NqrB, NqrC, NqrD, NqrE and NqrF.

The protein resides in the cell inner membrane. The enzyme catalyses a ubiquinone + n Na(+)(in) + NADH + H(+) = a ubiquinol + n Na(+)(out) + NAD(+). NQR complex catalyzes the reduction of ubiquinone-1 to ubiquinol by two successive reactions, coupled with the transport of Na(+) ions from the cytoplasm to the periplasm. NqrA to NqrE are probably involved in the second step, the conversion of ubisemiquinone to ubiquinol. The polypeptide is Na(+)-translocating NADH-quinone reductase subunit D (Neisseria meningitidis serogroup B (strain ATCC BAA-335 / MC58)).